Consider the following 372-residue polypeptide: Queuine tRNA-ribosyltransferase (372 aa).

Asp89 acts as the Proton acceptor in catalysis. Residues 89 to 93 (DSGGF), Asp143, Gln185, and Gly212 contribute to the substrate site. The tract at residues 243–249 (GVGKPED) is RNA binding. The active-site Nucleophile is Asp262. The RNA binding; important for wobble base 34 recognition stretch occupies residues 267–271 (TRNAR). Residues Cys300, Cys302, Cys305, and His331 each coordinate Zn(2+).

This sequence belongs to the queuine tRNA-ribosyltransferase family. Homodimer. Within each dimer, one monomer is responsible for RNA recognition and catalysis, while the other monomer binds to the replacement base PreQ1. Zn(2+) is required as a cofactor.

The catalysed reaction is 7-aminomethyl-7-carbaguanine + guanosine(34) in tRNA = 7-aminomethyl-7-carbaguanosine(34) in tRNA + guanine. It participates in tRNA modification; tRNA-queuosine biosynthesis. Catalyzes the base-exchange of a guanine (G) residue with the queuine precursor 7-aminomethyl-7-deazaguanine (PreQ1) at position 34 (anticodon wobble position) in tRNAs with GU(N) anticodons (tRNA-Asp, -Asn, -His and -Tyr). Catalysis occurs through a double-displacement mechanism. The nucleophile active site attacks the C1' of nucleotide 34 to detach the guanine base from the RNA, forming a covalent enzyme-RNA intermediate. The proton acceptor active site deprotonates the incoming PreQ1, allowing a nucleophilic attack on the C1' of the ribose to form the product. After dissociation, two additional enzymatic reactions on the tRNA convert PreQ1 to queuine (Q), resulting in the hypermodified nucleoside queuosine (7-(((4,5-cis-dihydroxy-2-cyclopenten-1-yl)amino)methyl)-7-deazaguanosine). The polypeptide is Queuine tRNA-ribosyltransferase (Pseudomonas aeruginosa (strain LESB58)).